Reading from the N-terminus, the 175-residue chain is Keratin-associated protein 13-2 (175 aa).

Repeat copies occupy residues 46-55, 56-65, 66-75, 76-85, and 92-101. A 5 X 10 AA approximate repeats region spans residues 46–101; that stretch reads CQLGSSLYRGCQEICWEPTSCQTSYVESSPCQTSCYRPRTSLLCSPCKTTYSGSLG.

The protein belongs to the PMG family. As to quaternary structure, interacts with hair keratins.

In the hair cortex, hair keratin intermediate filaments are embedded in an interfilamentous matrix, consisting of hair keratin-associated proteins (KRTAP), which are essential for the formation of a rigid and resistant hair shaft through their extensive disulfide bond cross-linking with abundant cysteine residues of hair keratins. The matrix proteins include the high-sulfur and high-glycine-tyrosine keratins. This Homo sapiens (Human) protein is Keratin-associated protein 13-2 (KRTAP13-2).